A 248-amino-acid chain; its full sequence is Transmembrane protein 223 (248 aa).

Helical transmembrane passes span 46 to 68 (IFRPLVFPVRVASAFTFTSAAVA), 84 to 104 (LLAIFCGGQFLFWAYLGHFAF), and 140 to 160 (YGFTSGCLIIGGGILALALLF).

It belongs to the TMEM223 family.

The protein localises to the mitochondrion inner membrane. In terms of biological role, mitochondrial ribosome-associated protein involved in the first steps of cytochrome c oxidase complex (complex IV) biogenesis. Stimulates the translation of MT-CO1 mRNA and is a constituent of early MT-CO1 assembly intermediates. This chain is Transmembrane protein 223, found in Danio rerio (Zebrafish).